The following is a 51-amino-acid chain: MAGNKPLGKKIRLAKALKQNRRVPMFAIARTKGSVKQHPKMRHWRRKNLKK.

The disordered stretch occupies residues 32 to 51 (KGSVKQHPKMRHWRRKNLKK). Basic residues predominate over residues 33 to 51 (GSVKQHPKMRHWRRKNLKK).

This sequence belongs to the eukaryotic ribosomal protein eL39 family.

The chain is Large ribosomal subunit protein eL39 from Methanococcus maripaludis (strain C5 / ATCC BAA-1333).